A 919-amino-acid polypeptide reads, in one-letter code: WD repeat-containing protein 47 (919 aa).

One can recognise a LisH domain in the interval 10–42; sequence KEVEIIKLILDFLNSKKLHISMLALEKESGVIN. A CTLH domain is found at 45-102; sequence FSDDMLFLRQLILDGQWDEVLQFIQPLECMEKFDKKRFRYIILKQKFLEALCVNNAMS. Thr285 is modified (phosphothreonine). Phosphoserine occurs at positions 289, 292, 297, and 312. Residues 393–421 form a disordered region; sequence GQSSVSEKEPANGAQNPGPAKQEKNELRD. Ser422 is modified (phosphoserine). A disordered region spans residues 500–590; the sequence is LNQQCNGSKG…SLSRSKGEED (91 aa). Polar residues predominate over residues 517–551; sequence VTSFTTPPQDSSQRLTHDASNIHTSTPRNPGSTNH. At Thr542 the chain carries Phosphothreonine. WD repeat units lie at residues 604 to 643, 659 to 698, 706 to 748, 753 to 791, 798 to 837, 840 to 879, and 886 to 918; these read EDTQAVRAVAFHPAGGLYAVGSNSKTLRVCAYPDVIDPSA, HHKGSIYCVAWSPCGQLLATGSNDKYVKVLPFNAETCNAT, MHDG…GQGL, GHTGHILALYTWSGWMIASGSQDKTVRFWDLRVPSCVRV, GTGSAVASVAVDPSGRLLATGQEDSSCMLYDIRGGRMVQS, PHSSDVRSVRFSPGAHYLLTGSYDMKIKVTDLQGDLTKQL, and EHKDKVIQCRWHTQDLSFLSSSADRTVTLWTYN.

In terms of assembly, interacts with MAP1S (via WD repeats).

It is found in the cytoplasm. The protein localises to the cytoskeleton. This Homo sapiens (Human) protein is WD repeat-containing protein 47 (WDR47).